Reading from the N-terminus, the 604-residue chain is Serine/threonine-protein kinase A-Raf (604 aa).

The region spanning 19-91 is the RBD domain; sequence GTVKVYLPNK…DGEELIVEVL (73 aa). Residues 98–144 form a Phorbol-ester/DAG-type zinc finger; that stretch reads MHNFVRKTFFSLAFCDFCLKFLFHGFRCQTCGYKFHQHCSSKVPTVC. Residues H99, C112, C115, C125, C128, H133, C136, and C144 each contribute to the Zn(2+) site. 2 positions are modified to phosphoserine: S157 and S162. Disordered regions lie at residues 178–222 and 241–287; these read ELLT…HMVS and TDAA…DEKK. T181 is modified (phosphothreonine). S186 carries the post-translational modification Phosphoserine. Residues 210–222 are compositionally biased toward polar residues; the sequence is IRSTSTPNVHMVS. Positions 252 to 265 are enriched in low complexity; sequence PRGSPSPASVSSGR. 2 positions are modified to phosphoserine: S255 and S267. Positions 272-287 are enriched in basic and acidic residues; that stretch reads LPAEQRERKSLADEKK. Positions 308–568 constitute a Protein kinase domain; sequence VQLLKRIGTG…PQILATIELL (261 aa). ATP is bound by residues 314 to 322 and K334; that span reads IGTGSFGTV. A Phosphothreonine modification is found at T316. The Proton acceptor role is filled by D427.

The protein belongs to the protein kinase superfamily. TKL Ser/Thr protein kinase family. RAF subfamily. In terms of assembly, interacts with TH1L/NELFD. Zn(2+) is required as a cofactor. In terms of processing, dephosphorylation by the SHOC2-MRAS-PP1c (SMP) complex consisting of SHOC2, GTP-bound M-Ras/MRAS and the catalytic subunit of protein phosphatase 1 (PPP1CA, PPP1CB or PPP1CC); this relieves inactivation and stimulates kinase activity.

It carries out the reaction L-seryl-[protein] + ATP = O-phospho-L-seryl-[protein] + ADP + H(+). The catalysed reaction is L-threonyl-[protein] + ATP = O-phospho-L-threonyl-[protein] + ADP + H(+). Its function is as follows. Involved in the transduction of mitogenic signals from the cell membrane to the nucleus. May also regulate the TOR signaling cascade. Phosphorylates PFKFB2. The sequence is that of Serine/threonine-protein kinase A-Raf (Araf) from Rattus norvegicus (Rat).